The sequence spans 338 residues: DNA-directed RNA polymerase subunit alpha (338 aa).

Positions 1 to 226 (MLIAQRPTLT…ELFGLARELN (226 aa)) are alpha N-terminal domain (alpha-NTD). The tract at residues 243–338 (LAADLALPIE…DADYADEQYN (96 aa)) is alpha C-terminal domain (alpha-CTD).

Belongs to the RNA polymerase alpha chain family. As to quaternary structure, homodimer. The RNAP catalytic core consists of 2 alpha, 1 beta, 1 beta' and 1 omega subunit. When a sigma factor is associated with the core the holoenzyme is formed, which can initiate transcription.

It catalyses the reaction RNA(n) + a ribonucleoside 5'-triphosphate = RNA(n+1) + diphosphate. In terms of biological role, DNA-dependent RNA polymerase catalyzes the transcription of DNA into RNA using the four ribonucleoside triphosphates as substrates. This chain is DNA-directed RNA polymerase subunit alpha, found in Beutenbergia cavernae (strain ATCC BAA-8 / DSM 12333 / CCUG 43141 / JCM 11478 / NBRC 16432 / NCIMB 13614 / HKI 0122).